We begin with the raw amino-acid sequence, 285 residues long: Dermonecrotic toxin LlSicTox-alphaIII2 (285 aa).

Residue H12 is part of the active site. Mg(2+) contacts are provided by E32 and D34. H47 functions as the Nucleophile in the catalytic mechanism. A disulfide bridge links C51 with C57. D91 contacts Mg(2+).

This sequence belongs to the arthropod phospholipase D family. Class I subfamily. Requires Mg(2+) as cofactor. In terms of tissue distribution, expressed by the venom gland.

It is found in the secreted. The catalysed reaction is an N-(acyl)-sphingosylphosphocholine = an N-(acyl)-sphingosyl-1,3-cyclic phosphate + choline. It carries out the reaction an N-(acyl)-sphingosylphosphoethanolamine = an N-(acyl)-sphingosyl-1,3-cyclic phosphate + ethanolamine. It catalyses the reaction a 1-acyl-sn-glycero-3-phosphocholine = a 1-acyl-sn-glycero-2,3-cyclic phosphate + choline. The enzyme catalyses a 1-acyl-sn-glycero-3-phosphoethanolamine = a 1-acyl-sn-glycero-2,3-cyclic phosphate + ethanolamine. Functionally, dermonecrotic toxins cleave the phosphodiester linkage between the phosphate and headgroup of certain phospholipids (sphingolipid and lysolipid substrates), forming an alcohol (often choline) and a cyclic phosphate. This toxin acts on sphingomyelin (SM) (228.2 U/mg). It may also act on ceramide phosphoethanolamine (CPE), lysophosphatidylcholine (LPC) and lysophosphatidylethanolamine (LPE), but not on lysophosphatidylserine (LPS), and lysophosphatidylglycerol (LPG). It acts by transphosphatidylation, releasing exclusively cyclic phosphate products as second products. Induces dermonecrosis, hemolysis, increased vascular permeability, edema, inflammatory response, and platelet aggregation. Is lethal to mice. The polypeptide is Dermonecrotic toxin LlSicTox-alphaIII2 (Loxosceles laeta (South American recluse spider)).